The following is a 188-amino-acid chain: Auxin-induced protein 22C (188 aa).

The EAR-like (transcriptional repression) motif lies at 13-17; sequence LRLGL. The tract at residues 16-57 is disordered; it reads GLPGAGGENNTDKDKNKNKKRVFSDIEGENSSSEEDGKKETK. The PB1 domain maps to 79–167; it reads KLYVKVSMDG…KRLRIMKRSD (89 aa).

The protein belongs to the Aux/IAA family. In terms of assembly, homodimers and heterodimers.

The protein resides in the nucleus. In terms of biological role, aux/IAA proteins are short-lived transcriptional factors that function as repressors of early auxin response genes at low auxin concentrations. Repression is thought to result from the interaction with auxin response factors (ARFs), proteins that bind to the auxin-responsive promoter element (AuxRE). Formation of heterodimers with ARF proteins may alter their ability to modulate early auxin response genes expression. The protein is Auxin-induced protein 22C (AUX22C) of Vigna radiata var. radiata (Mung bean).